A 194-amino-acid chain; its full sequence is Imidazoleglycerol-phosphate dehydratase (194 aa).

This sequence belongs to the imidazoleglycerol-phosphate dehydratase family.

Its subcellular location is the cytoplasm. The enzyme catalyses D-erythro-1-(imidazol-4-yl)glycerol 3-phosphate = 3-(imidazol-4-yl)-2-oxopropyl phosphate + H2O. It functions in the pathway amino-acid biosynthesis; L-histidine biosynthesis; L-histidine from 5-phospho-alpha-D-ribose 1-diphosphate: step 6/9. The sequence is that of Imidazoleglycerol-phosphate dehydratase from Methanothermobacter thermautotrophicus (strain ATCC 29096 / DSM 1053 / JCM 10044 / NBRC 100330 / Delta H) (Methanobacterium thermoautotrophicum).